The primary structure comprises 139 residues: Holo-[acyl-carrier-protein] synthase (139 aa).

Mg(2+) contacts are provided by aspartate 9 and glutamate 63.

Belongs to the P-Pant transferase superfamily. AcpS family. Requires Mg(2+) as cofactor.

The protein resides in the cytoplasm. The enzyme catalyses apo-[ACP] + CoA = holo-[ACP] + adenosine 3',5'-bisphosphate + H(+). Transfers the 4'-phosphopantetheine moiety from coenzyme A to a Ser of acyl-carrier-protein. The chain is Holo-[acyl-carrier-protein] synthase from Wigglesworthia glossinidia brevipalpis.